The sequence spans 1131 residues: MKRKSPLQVQALEGFYLEQMYPTPKEMEDLGKSLGLTLKEVRGWFKRRRSRGKGVKSMANDGLGAKNPQLYDRSLMRSSTSSRCVGVAVEERCIVGTRKASCQNLLPSSHILAKVFRKDGPSLGSEFDHLPSGARKASWLGTSSVGQQKQKVARKRKISELMDHTSQDCIQENATVMKHGIGKGLMTVWRVMNPNRRDVSPCVDLLDERATLPQSSARNPPHQKKKQRQLASILKQKLLQKRSTEKKRRSIHREAELNKDETQREFKENCELAADGEVFKETCQTISTLVDDEELEMRERHERGNPLTCSCHHPSSGSHGCFLCKGIAMRSSDSSLLFPDLLPKFPPNSVQMRMPFGLHPWNSSPESVKKLFKVVHFLYTYSVTLDIGPFTLDEFTRAFHDKDSLLLGKIHLSLLKLLLLDVETELERGSFSNLSISCKFLALLQSVESQILILDMWRNSLNSLTWTELLRQILVAAGYGSLKCAVQSEELSKERKLMKKYGLRLGTLKGELFRMLNGQGNNGLKISELADAPEVAVLNLATVPEERENSICSTLASDITLFEKISESTYRVRVNCFSEDPDKSQSDSDDSGSVDDESDDCSISSGDEIEHVSENPALRKVKCRKRRKHKSKMREVCSEIDESHPGEPWLLGLMEGEYSDLSVEEKLDVFVALIDLLSSGSTIRMEDLPRAVADCAPSIYSHGSGGKIKRSSSNQYSYPRGSWVHGGELYGIKALSKSSDSHPVDSSSIVGAFAKLAGNRANNVHPMQSVYLGSDRRFNRYWLFLGTCNANDPGHRCVFFESSEDGHWEVINNKEALRALLSVLDDRGRREARLIESLEKRESFLCQAMLSRQVTQSETAHFTDIVREDSSSPVSDIDNNLCLNEIANDQFSSQHAAIVFEIGSKREKSLLWSLIQEFDDWIWANFNFNLNSVKHRRRSYLDSLTRCKSCHDLYWRDEKHCKICHATFEVDIDLEERYAIHAATCMRKEECDTFPDHKVLSSQLQSLKAAVYAIESAMPEDALIGAWRKSAHRLWAKRLRRSSSVSEITQVIGDFVGAINEEWLWHCSDQGQTLMGEIINCFPSMPQTTSAIALWLVKLDTLIAPYVEKAPPERDQPLCRTRNTSRRASKR.

Residues 2-56 (KRKSPLQVQALEGFYLEQMYPTPKEMEDLGKSLGLTLKEVRGWFKRRRSRGKGVK) constitute a DNA-binding region (homeobox; TALE-type). The segment covering 239–251 (LQKRSTEKKRRSI) has biased composition (basic residues). The segment at 239–264 (LQKRSTEKKRRSIHREAELNKDETQR) is disordered. Positions 252–264 (HREAELNKDETQR) are enriched in basic and acidic residues. One can recognise a DDT domain in the interval 365-424 (PESVKKLFKVVHFLYTYSVTLDIGPFTLDEFTRAFHDKDSLLLGKIHLSLLKLLLLDVET). The segment at 579-609 (EDPDKSQSDSDDSGSVDDESDDCSISSGDEI) is disordered. The segment covering 587 to 600 (DSDDSGSVDDESDD) has biased composition (acidic residues).

Its subcellular location is the nucleus. In terms of biological role, transcriptional regulator required for the maintenance of the plant vegetative phase. May prevent the early activation of the vegetative-to-reproductive transition by regulating key genes that contribute to flower timing. The chain is Homeobox-DDT domain protein RLT3 from Arabidopsis thaliana (Mouse-ear cress).